Reading from the N-terminus, the 268-residue chain is Tryptophan synthase alpha chain (268 aa).

Active-site proton acceptor residues include glutamate 49 and aspartate 60.

It belongs to the TrpA family. In terms of assembly, tetramer of two alpha and two beta chains.

It carries out the reaction (1S,2R)-1-C-(indol-3-yl)glycerol 3-phosphate + L-serine = D-glyceraldehyde 3-phosphate + L-tryptophan + H2O. It functions in the pathway amino-acid biosynthesis; L-tryptophan biosynthesis; L-tryptophan from chorismate: step 5/5. Its function is as follows. The alpha subunit is responsible for the aldol cleavage of indoleglycerol phosphate to indole and glyceraldehyde 3-phosphate. This chain is Tryptophan synthase alpha chain, found in Sodalis glossinidius (strain morsitans).